The sequence spans 335 residues: Ferrochelatase (335 aa).

Histidine 211 and glutamate 290 together coordinate Fe cation.

The protein belongs to the ferrochelatase family.

The protein resides in the cytoplasm. The catalysed reaction is heme b + 2 H(+) = protoporphyrin IX + Fe(2+). It functions in the pathway porphyrin-containing compound metabolism; protoheme biosynthesis; protoheme from protoporphyrin-IX: step 1/1. Its function is as follows. Catalyzes the ferrous insertion into protoporphyrin IX. The sequence is that of Ferrochelatase from Sulfurihydrogenibium sp. (strain YO3AOP1).